We begin with the raw amino-acid sequence, 99 residues long: Nucleoid-associated protein UPA3_0088 (99 aa).

It belongs to the YbaB/EbfC family. In terms of assembly, homodimer.

Its subcellular location is the cytoplasm. The protein localises to the nucleoid. Functionally, binds to DNA and alters its conformation. May be involved in regulation of gene expression, nucleoid organization and DNA protection. This Ureaplasma parvum serovar 3 (strain ATCC 27815 / 27 / NCTC 11736) protein is Nucleoid-associated protein UPA3_0088.